A 444-amino-acid chain; its full sequence is Phosphoglucosamine mutase (444 aa).

Residue Ser104 is the Phosphoserine intermediate of the active site. Ser104, Asp243, Asp245, and Asp247 together coordinate Mg(2+). Ser104 bears the Phosphoserine mark.

It belongs to the phosphohexose mutase family. The cofactor is Mg(2+). Post-translationally, activated by phosphorylation.

It carries out the reaction alpha-D-glucosamine 1-phosphate = D-glucosamine 6-phosphate. In terms of biological role, catalyzes the conversion of glucosamine-6-phosphate to glucosamine-1-phosphate. This is Phosphoglucosamine mutase from Neisseria meningitidis serogroup B (strain ATCC BAA-335 / MC58).